We begin with the raw amino-acid sequence, 203 residues long: Endothelin-1 (203 aa).

The signal sequence occupies residues 1–25 (MDYFPMIIALLFVAFQGAPETAVLG). A propeptide spanning residues 26-50 (AELSPEAESQGETPSPHASWRPRRS) is cleaved from the precursor. A disordered region spans residues 27–48 (ELSPEAESQGETPSPHASWRPR). Intrachain disulfides connect cysteine 53–cysteine 67 and cysteine 55–cysteine 63. Positions 83–203 (YGLGSPSRSR…DKKVTHNRTH (121 aa)) are excised as a propeptide. Residues 110–124 (CQCASQKDKKCWSFC) form an endothelin-like region. Residue asparagine 200 is glycosylated (N-linked (GlcNAc...) asparagine).

The protein belongs to the endothelin/sarafotoxin family.

Its subcellular location is the secreted. In terms of biological role, endothelins are endothelium-derived vasoconstrictor peptides. Probable ligand for G-protein coupled receptors EDNRA and EDNRB which activates PTK2B, BCAR1, BCAR3 and, GTPases RAP1 and RHOA cascade in glomerular mesangial cells. Also binds the DEAR/FBXW7-AS1 receptor. Promotes mesenteric arterial wall remodeling via activation of ROCK signaling and subsequent colocalization of NFATC3 with F-actin filaments. NFATC3 then translocates to the nucleus where it subsequently promotes the transcription of the smooth muscle hypertrophy and differentiation marker ACTA2. The chain is Endothelin-1 (EDN1) from Sus scrofa (Pig).